The sequence spans 550 residues: MSIELNWETLTTGPDGEELAHRIRDFIHSKFQTVPLPRFIKSVTVHDFQFGAIPPELELKDITDPLPDFYEEDPDVDYDDEDEDVEETHDYEERRSEAAASPARSGDDGLFGGQRGDGMNKLDRVASSSSSSVGRGSAPRPGAPPQTPTKSNININTRMRGEVPPQDLTSPFLGVSTPGILSGGTSNFSYFHSHLASSGLSGTQTPLAAVAGAQLGGPPQWNGLRSTGRGSGRRRSLAAASQGLDGEGFTPSHSRTSSTVSNADLQTASLGGFGGHLTPTSFLRSGQQTLREKHSVSTLAPTSVGTSRPPTRDLTTTMSTAQEDGQGGDGNCESSSAAAAGNEQNESDSSDRTKYRERRIEDMQAVFRIKYAGDVKLLLTADILLDYPMPSFVGIPVRLSITGLTFDGVGVVAHIRKRVHFCFLSPEDALAAVGSASGKEAGDGDEYGDTSGGAAAAAASSSASAATTPQGVATLASPAGAAPGSDEKAGGNTRMGGLLQEIRVESEIGQREGGKQSLKNVGKVEKFILEQVRRIFEEEFVYPSFWTFLV.

In terms of domain architecture, SMP-LTD spans 1 to 550 (MSIELNWETL…VYPSFWTFLV (550 aa)). Disordered regions lie at residues 62 to 168 (ITDP…PQDL), 218 to 356 (PPQW…TKYR), and 474 to 493 (TLAS…GGNT). Over residues 69–90 (FYEEDPDVDYDDEDEDVEETHD) the composition is skewed to acidic residues. A compositionally biased stretch (low complexity) spans 125-140 (VASSSSSSVGRGSAPR). Composition is skewed to polar residues over residues 148 to 157 (PTKSNININT), 251 to 269 (PSHS…QTAS), 278 to 289 (TPTSFLRSGQQT), and 296 to 323 (VSTL…TAQE).

Belongs to the MDM12 family. As to quaternary structure, component of the ER-mitochondria encounter structure (ERMES) or MDM complex, composed of MMM1, MDM10, MDM12 and MDM34. An MMM1 homodimer associates with one molecule of MDM12 on each side in a pairwise head-to-tail manner, and the SMP-LTD domains of MMM1 and MDM12 generate a continuous hydrophobic tunnel for phospholipid trafficking.

It is found in the mitochondrion outer membrane. The protein resides in the endoplasmic reticulum membrane. In terms of biological role, component of the ERMES/MDM complex, which serves as a molecular tether to connect the endoplasmic reticulum (ER) and mitochondria. Components of this complex are involved in the control of mitochondrial shape and protein biogenesis, and function in nonvesicular lipid trafficking between the ER and mitochondria. MDM12 is required for the interaction of the ER-resident membrane protein MMM1 and the outer mitochondrial membrane-resident beta-barrel protein MDM10. The MDM12-MMM1 subcomplex functions in the major beta-barrel assembly pathway that is responsible for biogenesis of all mitochondrial outer membrane beta-barrel proteins, and acts in a late step after the SAM complex. The MDM10-MDM12-MMM1 subcomplex further acts in the TOM40-specific pathway after the action of the MDM12-MMM1 complex. Essential for establishing and maintaining the structure of mitochondria and maintenance of mtDNA nucleoids. The protein is Mitochondrial distribution and morphology protein 12 of Pyricularia oryzae (strain 70-15 / ATCC MYA-4617 / FGSC 8958) (Rice blast fungus).